Reading from the N-terminus, the 238-residue chain is CFA/I fimbrial subunit A (238 aa).

Positions 1 to 19 (MHKLFYLLSLLMAPFVANA) are cleaved as a signal peptide.

The protein resides in the fimbrium. In terms of biological role, might function as a shuttle protein in the transport of fimbria through the periplasmic space or might function as an adhesin. The chain is CFA/I fimbrial subunit A (cfaA) from Escherichia coli.